A 530-amino-acid chain; its full sequence is RNA-binding protein 39 (530 aa).

Positions 1-146 (MADDIDIEAM…PVREPIDNLT (146 aa)) are disordered. At alanine 2 the chain carries N-acetylalanine. The span at 14–32 (PYKKDENKLSSANGHEERS) shows a compositional bias: basic and acidic residues. 2 stretches are compositionally biased toward basic residues: residues 33–56 (KKRK…KERK) and 64–95 (KKSK…RGRY). At tyrosine 95 the chain carries Phosphotyrosine. Serine 97 and serine 100 each carry phosphoserine. Residue lysine 111 forms a Glycyl lysine isopeptide (Lys-Gly) (interchain with G-Cter in SUMO2) linkage. Serine 117 is subject to Phosphoserine. Lysine 119 participates in a covalent cross-link: Glycyl lysine isopeptide (Lys-Gly) (interchain with G-Cter in SUMO2). The span at 119-130 (KLSRRRSRSKSP) shows a compositional bias: basic residues. Residues serine 121 and serine 136 each carry the phosphoserine modification. Over residues 131–146 (FRKDKSPVREPIDNLT) the composition is skewed to basic and acidic residues. Residue threonine 146 is modified to Phosphothreonine. The region spanning 153–230 (RTVFCMQLAA…VPIIVQASQA (78 aa)) is the RRM 1 domain. Lysine 244 participates in a covalent cross-link: Glycyl lysine isopeptide (Lys-Gly) (interchain with G-Cter in SUMO2). Positions 250 to 328 (MRLYVGSLHF…RPMKVGHVTE (79 aa)) constitute an RRM 2 domain. Residues 291–355 (KGYGFITFSD…RTGIDLGTTG (65 aa)) are activating domain. Positions 291–406 (KGYGFITFSD…IDLQTRLSQQ (116 aa)) are interaction with JUN. Phosphoserine is present on residues serine 334, serine 337, and serine 341. Residues 355–406 (GRLQLMARLAEGTGLQIPPAAQQALQMSGSLAFGAVAEFSFVIDLQTRLSQQ) are interaction with ESR1 and ESR2. The interval 406–530 (QTEASALAAA…ATQLLVPSRR (125 aa)) is interaction with NCOA6. The RRM 3 domain maps to 445–508 (EIKDDVIEEC…KMITAAYVPL (64 aa)).

The protein belongs to the splicing factor SR family. In terms of assembly, interacts with NCOA6 and JUN. Interacts with ESR1 and ESR2, in the presence of estradiol (E2). Interacts with RSRC1 (via Arg/Ser-rich domain). Interacts with SF3B1. Interacts with ZNF106 (via N-terminus). Post-translationally, aryl sulfonamide anticancer drugs, such as indisulam (E7070) or E7820, promote ubiquitination and subsequent degradation by the DCX(DCAF15) complex. RBM39 degradation results in splicing defects and death in cancer cell lines. Aryl sulfonamide anticancer drugs change the substrate specificity of DCAF15 by acting as a molecular glue that promotes binding between DCAF15 and weak affinity interactor RBM39. Widely expressed. Highly expressed in pancreas, skeletal muscle, lung and brain. Expressed at intermediate level in kidney, liver and heart.

Its subcellular location is the nucleus speckle. Its function is as follows. RNA-binding protein that acts as a pre-mRNA splicing factor. Acts by promoting exon inclusion via regulation of exon cassette splicing. Also acts as a transcriptional coactivator for steroid nuclear receptors ESR1/ER-alpha and ESR2/ER-beta, and JUN/AP-1, independently of the pre-mRNA splicing factor activity. The sequence is that of RNA-binding protein 39 from Homo sapiens (Human).